The sequence spans 296 residues: Ribose import binding protein RbsB (296 aa).

The N-terminal stretch at 1–25 is a signal peptide; sequence MNMKKLATLVSAVALSATVSANAMA.

It belongs to the bacterial solute-binding protein 2 family. The complex is composed of an ATP-binding protein (RbsA), two transmembrane proteins (RbsC) and a solute-binding protein (RbsB).

The protein localises to the periplasm. In terms of biological role, part of the ABC transporter complex RbsABC involved in ribose import. Binds ribose. Also serves as the primary chemoreceptor for chemotaxis. The sequence is that of Ribose import binding protein RbsB from Escherichia coli (strain K12).